The primary structure comprises 199 residues: Superoxide dismutase [Mn/Fe] 2 (199 aa).

Fe(3+) contacts are provided by histidine 27, histidine 81, aspartate 161, and histidine 165. Mn(2+) is bound by residues histidine 27, histidine 81, aspartate 161, and histidine 165.

The protein belongs to the iron/manganese superoxide dismutase family. As to quaternary structure, homodimer. Can also form a heterodimer with SodA. Mn(2+) is required as a cofactor. It depends on Fe(3+) as a cofactor.

It catalyses the reaction 2 superoxide + 2 H(+) = H2O2 + O2. Functionally, destroys superoxide anion radicals which are normally produced within the cells and which are toxic to biological systems. Catalyzes the dismutation of superoxide anion radicals into O2 and H2O2 by successive reduction and oxidation of the transition metal ion at the active site. The sequence is that of Superoxide dismutase [Mn/Fe] 2 (sodM) from Staphylococcus aureus (strain USA300).